A 330-amino-acid chain; its full sequence is MKKGTDLLKKGFAKMVKHGVVMDVTNVEQAQIAEEAGAVAVMALERVPADIRAAGGVARMSDPALIEEIMDAVSIPVMAKCRIGHTTEALVLEAIGVDMIDESEVLTQADPFFHIYKKKFNVPFVCGARNLGEAVRRIWEGAAMIRTKGEAGTGNIVEAVRHMRLMNEAIAQLQRMTDEEVYGVAKFYANRYAELAKTVREGMGLPATVLENEPIYEGFTLAEIIDGLYEVLLEVKKLGRLPVVNFAAGGVATPADAALMMQLGSDGVFVGSGIFKSENPLERARAIVEATYNYDKPDIVAEVSKNLGEAMKGIDITQISEAEKMQYRGD.

Aspartate 23 contacts D-ribose 5-phosphate. Lysine 80 (schiff-base intermediate with D-ribose 5-phosphate) is an active-site residue. Residue glycine 152 coordinates D-ribose 5-phosphate. A D-glyceraldehyde 3-phosphate-binding site is contributed by arginine 164. Residues glycine 250 and 271–272 (GS) contribute to the D-ribose 5-phosphate site.

It belongs to the PdxS/SNZ family. As to quaternary structure, in the presence of PdxT, forms a dodecamer of heterodimers.

It catalyses the reaction aldehydo-D-ribose 5-phosphate + D-glyceraldehyde 3-phosphate + L-glutamine = pyridoxal 5'-phosphate + L-glutamate + phosphate + 3 H2O + H(+). Its pathway is cofactor biosynthesis; pyridoxal 5'-phosphate biosynthesis. In terms of biological role, catalyzes the formation of pyridoxal 5'-phosphate from ribose 5-phosphate (RBP), glyceraldehyde 3-phosphate (G3P) and ammonia. The ammonia is provided by the PdxT subunit. Can also use ribulose 5-phosphate and dihydroxyacetone phosphate as substrates, resulting from enzyme-catalyzed isomerization of RBP and G3P, respectively. This chain is Pyridoxal 5'-phosphate synthase subunit PdxS, found in Methanocaldococcus jannaschii (strain ATCC 43067 / DSM 2661 / JAL-1 / JCM 10045 / NBRC 100440) (Methanococcus jannaschii).